The following is a 7481-amino-acid chain: Polyketide synthase GfsA (7481 aa).

A loading module (LM) region spans residues 24–1020 (ASDEPIAVIG…ETAEFVRARL (997 aa)). The Ketosynthase family 3 (KS3) 1 domain maps to 26–451 (DEPIAVIGLS…GTNCHVVVSA (426 aa)). Residues 60 to 80 (RVPADRETPPSTEEESADGEA) are disordered. Gln197 serves as the catalytic For decarboxylation activity of LM. Ser662 acts as the For acyltransferase activity of LM in catalysis. In terms of domain architecture, Carrier 1 spans 945–1020 (PDPVETVRQL…ETAEFVRARL (76 aa)). Residue Ser980 is modified to O-(pantetheine 4'-phosphoryl)serine. Positions 1038 to 1454 (DEPIAVVAMS…GTNAHVILEQ (417 aa)) constitute a Ketosynthase family 3 (KS3) 2 domain. Module stretches follow at residues 1038-2517 (DEPI…AGEL), 2538-4063 (EDPI…LQRI), 4084-5636 (DDPI…GSEV), and 5655-7400 (DEPV…GEQL). Catalysis depends on for beta-ketoacyl synthase 1 activity residues Cys1201, His1336, and His1376. Residues 2442–2517 (RVLLDLVRGR…ALAEHLAGEL (76 aa)) form the Carrier 2 domain. Ser2477 is subject to O-(pantetheine 4'-phosphoryl)serine. A Ketosynthase family 3 (KS3) 3 domain is found at 2538-2964 (EDPIAIVAMS…GTNAHVIIEE (427 aa)). Catalysis depends on for beta-ketoacyl synthase 2 activity residues Cys2711, His2846, and His2886. Positions 3988–4063 (QALQDLVLTE…ATTEYLLQRI (76 aa)) constitute a Carrier 3 domain. Ser4023 is subject to O-(pantetheine 4'-phosphoryl)serine. The Ketosynthase family 3 (KS3) 4 domain occupies 4084–4514 (DDPIAIVAMG…GTNAHVILEQ (431 aa)). Residues Cys4261, His4396, and His4436 each act as for beta-ketoacyl synthase 3 activity in the active site. In terms of domain architecture, Carrier 4 spans 5561–5636 (TALLDLIRGQ…ALAEYVGSEV (76 aa)). Position 5596 is an O-(pantetheine 4'-phosphoryl)serine (Ser5596). Residues 5655–6081 (DEPVAIIGMS…GTNAHVILEQ (427 aa)) form the Ketosynthase family 3 (KS3) 5 domain. Residues Cys5828, His5963, and His6003 each act as for beta-ketoacyl synthase 4 activity in the active site. The tract at residues 6561 to 6685 (HPLLGAAVAL…GVLASGAATV (125 aa)) is N-terminal hotdog fold. One can recognise a PKS/mFAS DH domain in the interval 6561-6841 (HPLLGAAVAL…LRPVSADTIA (281 aa)). The active-site Proton acceptor; for dehydratase activity is His6593. The tract at residues 6700–6841 (ATAVDIDGLY…LRPVSADTIA (142 aa)) is C-terminal hotdog fold. Asp6761 functions as the Proton donor; for dehydratase activity in the catalytic mechanism. The Carrier 5 domain maps to 7325 to 7400 (QELLDFVCEH…LLAGHIGEQL (76 aa)). Ser7360 is subject to O-(pantetheine 4'-phosphoryl)serine.

Homodimer. The loading module (LM, residues 13-926) dimerizes. LM cross-links to its cognate acyl-carrier domain in a manner that seems physiological; mutation of residues in the 2 domains alters reactions efficiency in a manner predicted by the cross-linked crystal. Pantetheine 4'-phosphate is required as a cofactor.

Its pathway is antibiotic biosynthesis. Its function is as follows. First protein in the synthesis of the 16-membered macrolide antibiotics FD-891 and FD-892. Composed of 5 modules; the first is a loading module (LM) that synthesizes a starter unit used by the first elongation module for polyketide chain elongation. The starter unit is extended by multiple rounds of addition of malonyl-CoA or methylmalonyl-CoA, and other modifications to help generate the final products. The loading module (residues 1-927, LM with an inactive acyltransferase domain) preferentially decarboxylates malonyl-GfsA acyl carrier protein of the LM (ACP-LM) over methylmalonyl-GfsA ACP-LM and has no activity on malonyl-CoA or methymalonyl-CoA. LM decarboxylates malonyl-ACP-LM better than the malonyl-ACP-1 module of GfsA (i.e. the next module in the same protein) and has no activity on other malonyl-ACP modules. This is Polyketide synthase GfsA from Streptomyces halstedii.